Consider the following 871-residue polypeptide: MQKLGFPAMKSLDKPRSLSGSANMYSFSNRKPPDSVSSGSFSNLKLTAEKLVKDQAAMRTDLELANCKLKKSMEHVYALEEKLQNAFNENAKLRVRKKEDEKLWRGLESKFSSTKTLCDQLTETLQHLASQVQDAEKDKGFFETKFSTSSEAIDSLNQQMRDMSLRLDAAKEEITSRDKELEELKLEKQQKEMFYQTERCGTASLIEKKDAVITKLEASAAERKLNIENLNSQLEKVHLELTTKEDEVKDLVSIQEKLEKEKTSVQLSADNCFEKLVSSEQEVKKLDELVQYLVAELTELDKKNLTFKEKFDKLSGLYDTHIMLLQKDRDLALDRAQRSFDNLQGELFRVAATKEALESAGNELNEKIVELQNDKESLISQLSGLRCSTSQTIDKLESEAKGLVSKHADAESAISQLKEEMETLLESVKTSEDKKQELSLKLSSLEMESKEKCEKLQADAQRQVEELETLQKESESHQLQADLLAKEVNQLQTVIEEKGHVILQCNENEKQLNQQIIKDKELLATAETKLAEAKKQYDLMLESKQLELSRHLKELSQRNDQAINEIRRKYDVEKHEIINSEKDKVEKIIKDLSNKFDKELSDCKEESKRQLLTIQEEHSSLILSLREEHESKELNLKAKYDQELRQSQIQAENELKERITALKSEHDAQLKAFKCQYEDDCKKLQEELDLQRKKEERQRALVQLQWKVMSDNPPEEQEVNSNKNYSISKDSRLGGSKRSEHIRVRSDNDNVQDSPFVKAKETPVSKILKKAQNVNAGSVLSIPNPKHHSKVTHREYEVETNNGRVTKRRKTRNTTMFEEPQRRRTRATPKLTPQSIAKGTGMTSHARSANIGDLFSEGSLNPYADDPYAFD.

Residues 1–40 form a disordered region; that stretch reads MQKLGFPAMKSLDKPRSLSGSANMYSFSNRKPPDSVSSGS. A compositionally biased stretch (polar residues) spans 18 to 40; the sequence is LSGSANMYSFSNRKPPDSVSSGS. Coiled coils occupy residues 58–304 and 331–608; these read MRTD…DKKN and LALD…EESK. Disordered stretches follow at residues 708-741 and 778-871; these read VMSD…RSEH and SVLS…YAFD. Positions 719-728 are enriched in polar residues; sequence VNSNKNYSIS. Positions 729-741 are enriched in basic and acidic residues; that stretch reads KDSRLGGSKRSEH. The span at 831 to 847 shows a compositional bias: polar residues; sequence LTPQSIAKGTGMTSHAR.

It is found in the nucleus. Required for chromosome synapsis and normal fidelity of crossing over. The sequence is that of Synaptonemal complex protein 1 (ZYP1A) from Arabidopsis thaliana (Mouse-ear cress).